Reading from the N-terminus, the 549-residue chain is Cobalt-dependent inorganic pyrophosphatase (549 aa).

CBS domains follow at residues 74–130 (EMDK…IWDS) and 252–310 (MTKD…VIQV). AMP is bound by residues K100, 116–119 (STSN), T253, V258, and 278–280 (YSN).

Belongs to the PPase family. Homodimer. The cofactor is Co(2+). It depends on Mn(2+) as a cofactor. Mg(2+) serves as cofactor.

It carries out the reaction diphosphate + H2O = 2 phosphate + H(+). Inhibited by AMP and ADP with 25% and 35% of activity remaining, respectively, at saturating conditions. Activated 5-fold by diadenosine polyphosphates(Ap[n]A) with n&gt;2 (Ap3A, Ap4A, Ap5A, Ap6A) at saturating conditions. This chain is Cobalt-dependent inorganic pyrophosphatase, found in Clostridium perfringens (strain 13 / Type A).